The following is a 185-amino-acid chain: Large ribosomal subunit protein uL5 (185 aa).

The protein belongs to the universal ribosomal protein uL5 family. As to quaternary structure, part of the 50S ribosomal subunit; part of the 5S rRNA/L5/L18/L25 subcomplex. Contacts the 5S rRNA and the P site tRNA. Forms a bridge to the 30S subunit in the 70S ribosome.

This is one of the proteins that bind and probably mediate the attachment of the 5S RNA into the large ribosomal subunit, where it forms part of the central protuberance. In the 70S ribosome it contacts protein S13 of the 30S subunit (bridge B1b), connecting the 2 subunits; this bridge is implicated in subunit movement. Contacts the P site tRNA; the 5S rRNA and some of its associated proteins might help stabilize positioning of ribosome-bound tRNAs. This is Large ribosomal subunit protein uL5 from Parabacteroides distasonis (strain ATCC 8503 / DSM 20701 / CIP 104284 / JCM 5825 / NCTC 11152).